Reading from the N-terminus, the 580-residue chain is MVEFKFEVKARDAAGRIGKLEVNGKKIETPAIMPVINPKQLTVTPKELKEMGFGIIITNSYIIYKTPELREKALEVGIHRLLDYDGIIEVDSGSFQLMRYGGVDVTNREIVEFQERIGVDIGTFLDIPTPPDAPREKAEEDLRITLERAKEAEEIKGIAMNAAVQGSTYPDLRTYAARKLSEMNFEIHPIGAVVPLMESYRYRDLVDVVIASKQGLRSDRPVHLFGAGHPMIFALAVAMGIDLFDSASYALYAKDDRYLTPEGTKHLSELEYFPCSCPVCSRYTPRELREMPKEERTRLLALHNLWVIREELNRVKQAIKEGELWRLVDERARSHPKLYAAYKRLLEYQDYLEKNEPITKASAFFKVSEESLKWPIVQRAKARAERVKAKFPETINHPIFGEIPKYLSLSYPFAQSEGEEDFTIEKPGKREVRNYVMAVAEYQFGEGTREAFKDAFVELSRKTGMPRQIKAKGKHLATFRAEDGLLTLGIEGAKRLHEILPFPRMRVVVDEDAEPFARKGKNVFAKFVIDADENIRPYDEVLIVNRNDELLATGQTLLNGRELKLFQSGLAVKVRRGVEK.

D91 serves as the catalytic Nucleophile. The substrate site is built by D126 and A192. C275, C277, and C280 together coordinate Zn(2+). A PUA domain is found at 504–579 (RMRVVVDEDA…LAVKVRRGVE (76 aa)).

The protein belongs to the archaeosine tRNA-ribosyltransferase family. Zn(2+) serves as cofactor.

The enzyme catalyses guanosine(15) in tRNA + 7-cyano-7-deazaguanine = 7-cyano-7-carbaguanosine(15) in tRNA + guanine. It functions in the pathway tRNA modification; archaeosine-tRNA biosynthesis. Functionally, exchanges the guanine residue with 7-cyano-7-deazaguanine (preQ0) at position 15 in the dihydrouridine loop (D-loop) of archaeal tRNAs. The polypeptide is tRNA-guanine(15) transglycosylase (Thermococcus onnurineus (strain NA1)).